Reading from the N-terminus, the 473-residue chain is Lipid A galacturonosyltransferase RgtD (473 aa).

Transmembrane regions (helical) follow at residues 6 to 26 (GLLI…FDAT), 68 to 88 (AIYW…LVLM), 94 to 114 (FVGP…PGVA), 118 to 138 (VFFS…LAYF), 160 to 180 (FLTK…LLLI), 190 to 210 (VIIA…WNLQ), 238 to 258 (FFAA…LWAV), 271 to 291 (KMLV…ATVA), 295 to 315 (ANWA…LLYL), and 327 to 347 (INGI…QLLL).

The protein localises to the cell membrane. It participates in bacterial outer membrane biogenesis; LPS lipid A biosynthesis. Involved in the modification of the lipopolysaccharide (LPS) lipid A moiety. Catalyzes the transfer of a galacturonic acid (GalA) residue to the 4'-position of 4'-dephosphorylated lipid A, using dodecaprenyl phosphate-GalA as the donor substrate. Acts before the other GalA transferases RgtA, RgtB and RgtC. The polypeptide is Lipid A galacturonosyltransferase RgtD (Rhizobium johnstonii (strain DSM 114642 / LMG 32736 / 3841) (Rhizobium leguminosarum bv. viciae)).